The sequence spans 672 residues: Spermatid perinuclear RNA-binding protein (672 aa).

The 358-residue stretch at 5-362 (RSFANDDRHV…ALKRPFEDGV (358 aa)) folds into the DZF domain. Residues 348–370 (GTGSSALKRPFEDGVGDDKDPNK) are disordered. Positions 356–370 (RPFEDGVGDDKDPNK) are enriched in basic and acidic residues. Residues 386 to 452 (DLMNALMRLN…AVKVLQAMGY (67 aa)) enclose the DRBM 1 domain. Residues 463–494 (VSSDEKSDNEGKNETVSSISSNNTGNSTADTS) are disordered. A compositionally biased stretch (basic and acidic residues) spans 465–475 (SDEKSDNEGKN). A compositionally biased stretch (low complexity) spans 477-490 (TVSSISSNNTGNST). The 67-residue stretch at 509–575 (SGKNPVMELN…ALAALEKLFS (67 aa)) folds into the DRBM 2 domain.

Its subcellular location is the cytoplasm. Its function is as follows. May be involved in normal spermatogenesis and sperm function. Binds to double-stranded DNA and RNA. The protein is Spermatid perinuclear RNA-binding protein (STRBP) of Gallus gallus (Chicken).